We begin with the raw amino-acid sequence, 59 residues long: ATP synthase subunit J, mitochondrial (59 aa).

A helical membrane pass occupies residues 9-25 (ILKVYWPFFVAGAAVYY).

It belongs to the ATPase j subunit family. F-type ATPases have 2 components, CF(1) - the catalytic core - and CF(0) - the membrane proton channel. In yeast, the dimeric form of ATP synthase consists of 17 polypeptides: alpha, beta, gamma, delta, epsilon, 4 (B), 5 (OSCP), 6 (A), 8, 9 (C), d, E (Tim11), f, g, h, i/j and k.

The protein resides in the mitochondrion membrane. Mitochondrial membrane ATP synthase (F(1)F(0) ATP synthase or Complex V) produces ATP from ADP in the presence of a proton gradient across the membrane which is generated by electron transport complexes of the respiratory chain. F-type ATPases consist of two structural domains, F(1) - containing the extramembraneous catalytic core and F(0) - containing the membrane proton channel, linked together by a central stalk and a peripheral stalk. During catalysis, ATP synthesis in the catalytic domain of F(1) is coupled via a rotary mechanism of the central stalk subunits to proton translocation. Part of the complex F(0) domain. Minor subunit located with subunit a in the membrane. This chain is ATP synthase subunit J, mitochondrial (ATP18), found in Saccharomyces cerevisiae (strain ATCC 204508 / S288c) (Baker's yeast).